The sequence spans 59 residues: Large ribosomal subunit protein uL30 (59 aa).

Belongs to the universal ribosomal protein uL30 family. Part of the 50S ribosomal subunit.

In Staphylococcus epidermidis (strain ATCC 12228 / FDA PCI 1200), this protein is Large ribosomal subunit protein uL30.